The following is a 74-amino-acid chain: Small ribosomal subunit protein bS18 (74 aa).

It belongs to the bacterial ribosomal protein bS18 family. In terms of assembly, part of the 30S ribosomal subunit. Forms a tight heterodimer with protein bS6.

Functionally, binds as a heterodimer with protein bS6 to the central domain of the 16S rRNA, where it helps stabilize the platform of the 30S subunit. The polypeptide is Small ribosomal subunit protein bS18 (Gloeobacter violaceus (strain ATCC 29082 / PCC 7421)).